A 77-amino-acid polypeptide reads, in one-letter code: Exodeoxyribonuclease 7 small subunit (77 aa).

It belongs to the XseB family. In terms of assembly, heterooligomer composed of large and small subunits.

It localises to the cytoplasm. The catalysed reaction is Exonucleolytic cleavage in either 5'- to 3'- or 3'- to 5'-direction to yield nucleoside 5'-phosphates.. Bidirectionally degrades single-stranded DNA into large acid-insoluble oligonucleotides, which are then degraded further into small acid-soluble oligonucleotides. This Chromobacterium violaceum (strain ATCC 12472 / DSM 30191 / JCM 1249 / CCUG 213 / NBRC 12614 / NCIMB 9131 / NCTC 9757 / MK) protein is Exodeoxyribonuclease 7 small subunit.